We begin with the raw amino-acid sequence, 700 residues long: Choline transporter-like protein 5-B (700 aa).

Over 1-4 (GCTD) the chain is Cytoplasmic. A helical transmembrane segment spans residues 5–25 (VLCCVIFVIVILGYIVLGTVA). Over 26-209 (WMHGDPRKVV…KIFEDYASSW (184 aa)) the chain is Extracellular. 2 N-linked (GlcNAc...) asparagine glycosylation sites follow: asparagine 157 and asparagine 164. A helical transmembrane segment spans residues 210 to 230 (FWILIGLVISMLVSLVFILLL). At 231–233 (RFT) the chain is on the cytoplasmic side. Residues 234 to 254 (AGVLFWLVIFGVIAAVGYGIW) form a helical membrane-spanning segment. The Extracellular segment spans residues 255–292 (HCYWEYSSLKGKPDSDVTISDIGFQTDFRVYLQLSQTW). The chain crosses the membrane as a helical span at residues 293–313 (LIFMTSLAVIEAIIILVLIFL). At 314 to 341 (RNRVRIAIALLKEGSKAIGCIMSTLFYP) the chain is on the cytoplasmic side. A helical transmembrane segment spans residues 342–362 (IITFLLLALCIAYWAVTAVFL). At 363 to 432 (ASSGEAVYKV…LQLCNLLVFL (70 aa)) the chain is on the extracellular side. 2 N-linked (GlcNAc...) asparagine glycosylation sites follow: asparagine 383 and asparagine 395. Residues 433–455 (WLVNFTIALGQCTLAGAFAAYYW) form a helical membrane-spanning segment. The Cytoplasmic segment spans residues 456-482 (ALRKPADIPPCPLASSFGRALRYHTGS). A helical transmembrane segment spans residues 483–503 (LAFGALILSIVQFIRIILEYL). The Extracellular segment spans residues 504–541 (DHKLKGAHNAFTRFLLCCLKCCFWCLEHFIKFMNRNAY). A helical membrane pass occupies residues 542 to 562 (IMISIYGKNFCTSARDAFFLL). Over 563–577 (MRNVMRVAVLDKVTD) the chain is Cytoplasmic. A helical membrane pass occupies residues 578–598 (FLLFLGKLLISGSVGVLAFFF). Residues 599–616 (FTRQIPVIQEEVPSLNYY) are Extracellular-facing. Residues 617-637 (WVPLLTVIFGSYMIAHGFFNV) traverse the membrane as a helical segment. Residues 638 to 687 (YAMCVDTLFLCFLLDLEKNDGSATRPYYMCSSLRAILNKKNQKRPKETKR) lie on the Cytoplasmic side of the membrane. The segment at 676–700 (KKNQKRPKETKRGRKQKKEQPKSRH) is disordered. Over residues 677–692 (KNQKRPKETKRGRKQK) the composition is skewed to basic residues.

It belongs to the CTL (choline transporter-like) family.

It is found in the cell membrane. The catalysed reaction is choline(out) + n H(+)(in) = choline(in) + n H(+)(out). Its function is as follows. Choline/H+ antiporter. The polypeptide is Choline transporter-like protein 5-B (slc44a5b) (Danio rerio (Zebrafish)).